The chain runs to 291 residues: Formamidopyrimidine-DNA glycosylase (291 aa).

Pro2 functions as the Schiff-base intermediate with DNA in the catalytic mechanism. Glu3 acts as the Proton donor in catalysis. Lys61 (proton donor; for beta-elimination activity) is an active-site residue. Positions 103, 123, and 165 each coordinate DNA. The segment at 251 to 285 (EVYGRGGQACSRCASTIRRDAFMNRSSFSCPACQP) adopts an FPG-type zinc-finger fold. Arg275 serves as the catalytic Proton donor; for delta-elimination activity.

This sequence belongs to the FPG family. Monomer. Zn(2+) is required as a cofactor.

The enzyme catalyses Hydrolysis of DNA containing ring-opened 7-methylguanine residues, releasing 2,6-diamino-4-hydroxy-5-(N-methyl)formamidopyrimidine.. It carries out the reaction 2'-deoxyribonucleotide-(2'-deoxyribose 5'-phosphate)-2'-deoxyribonucleotide-DNA = a 3'-end 2'-deoxyribonucleotide-(2,3-dehydro-2,3-deoxyribose 5'-phosphate)-DNA + a 5'-end 5'-phospho-2'-deoxyribonucleoside-DNA + H(+). In terms of biological role, involved in base excision repair of DNA damaged by oxidation or by mutagenic agents. Acts as a DNA glycosylase that recognizes and removes damaged bases. Has a preference for oxidized purines, such as 7,8-dihydro-8-oxoguanine (8-oxoG). Has AP (apurinic/apyrimidinic) lyase activity and introduces nicks in the DNA strand. Cleaves the DNA backbone by beta-delta elimination to generate a single-strand break at the site of the removed base with both 3'- and 5'-phosphates. This chain is Formamidopyrimidine-DNA glycosylase, found in Parafrankia sp. (strain EAN1pec).